The following is a 2273-amino-acid chain: Linear gramicidin synthase subunit A (2273 aa).

The tract at residues 1–144 (MRILFLTTFM…AIEELFIREW (144 aa)) is GART. 2 Carrier domains span residues 693–767 (APTD…TEQK) and 1724–1798 (APRT…TSEQ). An O-(pantetheine 4'-phosphoryl)serine mark is found at Ser-728 and Ser-1759.

It belongs to the ATP-dependent AMP-binding enzyme family. Large multienzyme complex composed of 4 subunits; LgrA, LgrB, LgrC and LgrD. Pantetheine 4'-phosphate is required as a cofactor.

In terms of biological role, activates valine (or leucine, but much less frequently), and then glycine and catalyzes the formation of the peptide bond in the first step of peptide synthesis. This enzyme may also play a role in N-formylation of the first amino acid residue in the synthesized dipeptide. This chain is Linear gramicidin synthase subunit A (lgrA), found in Brevibacillus parabrevis.